Here is a 413-residue protein sequence, read N- to C-terminus: 3-isopropylmalate dehydratase large subunit (413 aa).

Residues C293, C353, and C356 each coordinate [4Fe-4S] cluster.

Belongs to the aconitase/IPM isomerase family. LeuC type 2 subfamily. As to quaternary structure, heterodimer of LeuC and LeuD. [4Fe-4S] cluster is required as a cofactor.

It carries out the reaction (2R,3S)-3-isopropylmalate = (2S)-2-isopropylmalate. Its pathway is amino-acid biosynthesis; L-leucine biosynthesis; L-leucine from 3-methyl-2-oxobutanoate: step 2/4. Its function is as follows. Catalyzes the isomerization between 2-isopropylmalate and 3-isopropylmalate, via the formation of 2-isopropylmaleate. This Picrophilus torridus (strain ATCC 700027 / DSM 9790 / JCM 10055 / NBRC 100828 / KAW 2/3) protein is 3-isopropylmalate dehydratase large subunit.